A 264-amino-acid polypeptide reads, in one-letter code: Proteasome assembly chaperone 2 (264 aa).

Thr-137 is subject to Phosphothreonine.

It belongs to the PSMG2 family. Forms a heterodimer with PSMG1. The PSMG1-PSMG2 heterodimer interacts directly with the PSMA5 and PSMA7 proteasome alpha subunits. In terms of processing, degraded by the proteasome upon completion of 20S proteasome maturation.

The protein resides in the nucleus. In terms of biological role, chaperone protein which promotes assembly of the 20S proteasome as part of a heterodimer with PSMG1. The PSMG1-PSMG2 heterodimer binds to the PSMA5 and PSMA7 proteasome subunits, promotes assembly of the proteasome alpha subunits into the heteroheptameric alpha ring and prevents alpha ring dimerization. In Mus musculus (Mouse), this protein is Proteasome assembly chaperone 2.